We begin with the raw amino-acid sequence, 360 residues long: Phospho-N-acetylmuramoyl-pentapeptide-transferase (360 aa).

Helical transmembrane passes span 27–47, 71–91, 93–113, 128–148, 168–188, 199–219, 239–259, 262–282, 288–308, and 337–357; these read GAMI…INSL, TPTM…LLWA, LASV…AIGF, FSGK…AFTI, LVIN…VGAG, GLAI…AYLS, LAVV…FNAP, AIFM…TVAV, IVLA…IIQV, and QVVI…LSTL.

The protein belongs to the glycosyltransferase 4 family. MraY subfamily. Mg(2+) is required as a cofactor.

It localises to the cell inner membrane. The catalysed reaction is UDP-N-acetyl-alpha-D-muramoyl-L-alanyl-gamma-D-glutamyl-meso-2,6-diaminopimeloyl-D-alanyl-D-alanine + di-trans,octa-cis-undecaprenyl phosphate = di-trans,octa-cis-undecaprenyl diphospho-N-acetyl-alpha-D-muramoyl-L-alanyl-D-glutamyl-meso-2,6-diaminopimeloyl-D-alanyl-D-alanine + UMP. Its pathway is cell wall biogenesis; peptidoglycan biosynthesis. In terms of biological role, catalyzes the initial step of the lipid cycle reactions in the biosynthesis of the cell wall peptidoglycan: transfers peptidoglycan precursor phospho-MurNAc-pentapeptide from UDP-MurNAc-pentapeptide onto the lipid carrier undecaprenyl phosphate, yielding undecaprenyl-pyrophosphoryl-MurNAc-pentapeptide, known as lipid I. This chain is Phospho-N-acetylmuramoyl-pentapeptide-transferase, found in Brucella abortus (strain S19).